The sequence spans 127 residues: Fluoride-specific ion channel FluC (127 aa).

4 consecutive transmembrane segments (helical) span residues 6–26 (LAIS…GLGF), 37–57 (TLLA…FFAA), 67–87 (LLVI…SAEV), and 96–116 (LLWA…MTLL). 2 residues coordinate Na(+): G75 and T78.

The protein belongs to the fluoride channel Fluc/FEX (TC 1.A.43) family.

The protein localises to the cell inner membrane. It catalyses the reaction fluoride(in) = fluoride(out). Its activity is regulated as follows. Na(+) is not transported, but it plays an essential structural role and its presence is essential for fluoride channel function. Functionally, fluoride-specific ion channel. Important for reducing fluoride concentration in the cell, thus reducing its toxicity. This Tolumonas auensis (strain DSM 9187 / NBRC 110442 / TA 4) protein is Fluoride-specific ion channel FluC.